The chain runs to 240 residues: CD302 antigen (240 aa).

One can recognise a C-type lectin domain in the interval 40-160 (FQDSCYIFLQ…CEVSSVEGTL (121 aa)). An N-linked (GlcNAc...) asparagine glycan is attached at Asn-117. A disulfide bridge links Cys-136 with Cys-151. Residues 177–197 (ILISALVIASTVILTVLGAVI) traverse the membrane as a helical segment. Residues 198–240 (WFLYKRNLDSGFTTVFSTAPQSPFNDDCVLVVAEENEYAVQFD) lie on the Cytoplasmic side of the membrane.

It localises to the membrane. Its subcellular location is the cell projection. The protein resides in the filopodium. It is found in the cytoplasm. The protein localises to the cell cortex. In terms of biological role, potential multifunctional C-type lectin receptor that may play roles in endocytosis and phagocytosis as well as in cell adhesion and migration. The polypeptide is CD302 antigen (Sus scrofa (Pig)).